Consider the following 33-residue polypeptide: Cysteine-rich venom protein (33 aa).

Residues N1–A33 are disordered. The span at S24–A33 shows a compositional bias: basic residues.

The protein belongs to the CRISP family. Contains 8 disulfide bonds. In terms of tissue distribution, expressed by the venom gland.

Its subcellular location is the secreted. Its function is as follows. Blocks contraction of smooth muscle elicited by high potassium-induced depolarization, but does not block caffeine-stimulated contraction. May target voltage-gated calcium channels on smooth muscle (Cav). The protein is Cysteine-rich venom protein of Naja naja (Indian cobra).